A 337-amino-acid chain; its full sequence is MRSAIAAPILFLLVSFFVQECESVGFAPELYCGLENCYDVLEVNREEFDKQKLAKAYRALARKHHPDRVKNKEEKLLAEERFRVIATAYETLKDDEAKTNYDYYLDHPDQRFYNYYQYYRLRAAPKVDLRIVIVGTILIISLFQFLSAKHKFSEAIEYATGVGKFRNMAIKDGIDKGLLEMDRNGKLKKNKGVDNDEVIKQIIIDNLDVTGGYKRESIYDTLAWHTIIFPLTIFRYIKWTALWYWRFAIQKEEYDDDAKLYLIRKYIGVSQMEFDQKYTDEDIDDLFERECWLKRNCATWKAERDAAEQEKMAQSGRYKRYKRYMKNAGTISFVDED.

A helical membrane pass occupies residues 4-24; sequence AIAAPILFLLVSFFVQECESV. A J domain is found at 36–105; sequence NCYDVLEVNR…EAKTNYDYYL (70 aa). 2 helical membrane passes run 127-147 and 222-242; these read VDLRIVIVGTILIISLFQFLS and LAWHTIIFPLTIFRYIKWTAL. Positions 293-323 form a coiled coil; it reads LKRNCATWKAERDAAEQEKMAQSGRYKRYKR.

This sequence belongs to the DNAJC25 family.

The protein resides in the membrane. The protein is DnaJ homolog dnj-2 (dnj-2) of Caenorhabditis elegans.